The primary structure comprises 317 residues: 2,3,4,5-tetrahydropyridine-2,6-dicarboxylate N-succinyltransferase (317 aa).

Mg(2+)-binding residues include Asp166 and Glu183. Glu199 acts as the Acyl-anhydride intermediate in catalysis. Residues Arg201, Gly216, Ser219, Ala242, 257 to 258, Gly265, Lys277, and 290 to 293 contribute to the succinyl-CoA site; these read EA and RRNS.

The protein belongs to the type 2 tetrahydrodipicolinate N-succinyltransferase family. As to quaternary structure, homotrimer.

The protein localises to the cytoplasm. It catalyses the reaction (S)-2,3,4,5-tetrahydrodipicolinate + succinyl-CoA + H2O = (S)-2-succinylamino-6-oxoheptanedioate + CoA. It functions in the pathway amino-acid biosynthesis; L-lysine biosynthesis via DAP pathway; LL-2,6-diaminopimelate from (S)-tetrahydrodipicolinate (succinylase route): step 1/3. Catalyzes the conversion of the cyclic tetrahydrodipicolinate (THDP) into the acyclic N-succinyl-L-2-amino-6-oxopimelate using succinyl-CoA. In Mycobacterium tuberculosis (strain CDC 1551 / Oshkosh), this protein is 2,3,4,5-tetrahydropyridine-2,6-dicarboxylate N-succinyltransferase (dapD).